Reading from the N-terminus, the 305-residue chain is UDP-3-O-acyl-N-acetylglucosamine deacetylase (305 aa).

The Zn(2+) site is built by His-79, His-238, and Asp-242. Catalysis depends on His-265, which acts as the Proton donor.

The protein belongs to the LpxC family. The cofactor is Zn(2+).

The enzyme catalyses a UDP-3-O-[(3R)-3-hydroxyacyl]-N-acetyl-alpha-D-glucosamine + H2O = a UDP-3-O-[(3R)-3-hydroxyacyl]-alpha-D-glucosamine + acetate. The protein operates within glycolipid biosynthesis; lipid IV(A) biosynthesis; lipid IV(A) from (3R)-3-hydroxytetradecanoyl-[acyl-carrier-protein] and UDP-N-acetyl-alpha-D-glucosamine: step 2/6. In terms of biological role, catalyzes the hydrolysis of UDP-3-O-myristoyl-N-acetylglucosamine to form UDP-3-O-myristoylglucosamine and acetate, the committed step in lipid A biosynthesis. This chain is UDP-3-O-acyl-N-acetylglucosamine deacetylase, found in Klebsiella pneumoniae subsp. pneumoniae (strain ATCC 700721 / MGH 78578).